Consider the following 309-residue polypeptide: HPr kinase/phosphorylase (309 aa).

Catalysis depends on residues His138 and Lys159. 153–160 contacts ATP; it reads GQSGVGKS. Ser160 contributes to the Mg(2+) binding site. The active-site Proton acceptor; for phosphorylation activity. Proton donor; for dephosphorylation activity is the Asp177. The tract at residues 201-210 is important for the catalytic mechanism of both phosphorylation and dephosphorylation; the sequence is LEIRGLGIIN. Position 202 (Glu202) interacts with Mg(2+). Residue Arg243 is part of the active site. Positions 264–269 are important for the catalytic mechanism of dephosphorylation; the sequence is PVRPGR.

Belongs to the HPrK/P family. Homohexamer. The cofactor is Mg(2+).

The enzyme catalyses [HPr protein]-L-serine + ATP = [HPr protein]-O-phospho-L-serine + ADP + H(+). It catalyses the reaction [HPr protein]-O-phospho-L-serine + phosphate + H(+) = [HPr protein]-L-serine + diphosphate. Its function is as follows. Catalyzes the ATP- as well as the pyrophosphate-dependent phosphorylation of a specific serine residue in HPr, a phosphocarrier protein of the phosphoenolpyruvate-dependent sugar phosphotransferase system (PTS). HprK/P also catalyzes the pyrophosphate-producing, inorganic phosphate-dependent dephosphorylation (phosphorolysis) of seryl-phosphorylated HPr (P-Ser-HPr). The two antagonistic activities of HprK/P are regulated by several intracellular metabolites, which change their concentration in response to the absence or presence of rapidly metabolisable carbon sources (glucose, fructose, etc.) in the growth medium. Also phosphorylates/dephosphorylates the HPr-like catabolite repression protein crh on a specific serine residue. Therefore, by controlling the phosphorylation state of HPr and crh, HPrK/P is a sensor enzyme that plays a major role in the regulation of carbon metabolism and sugar transport: it mediates carbon catabolite repression (CCR), and regulates PTS-catalyzed carbohydrate uptake and inducer exclusion. The chain is HPr kinase/phosphorylase from Bacillus cytotoxicus (strain DSM 22905 / CIP 110041 / 391-98 / NVH 391-98).